The sequence spans 595 residues: Laccase-18 (595 aa).

The first 29 residues, 1-29 (MEKLSTAASLFCVVVAATALAMAVVGGEA), serve as a signal peptide directing secretion. Plastocyanin-like domains are found at residues 37–153 (MVHE…PRNG) and 162–316 (KDVP…YAGA). N-linked (GlcNAc...) asparagine glycosylation is found at N42 and N48. Positions 87 and 89 each coordinate Cu cation. An N-linked (GlcNAc...) asparagine glycan is attached at N121. Residues H132 and H134 each coordinate Cu cation. N-linked (GlcNAc...) asparagine glycosylation is found at N206, N345, N382, N402, N409, N439, and N470. Residues 429–571 (DFPVRPPRPF…ATAFIVEDGP (143 aa)) enclose the Plastocyanin-like 3 domain. Residues N488, H491, H493, H550, C551, H552, H556, and M561 each contribute to the Cu cation site. The interval 570-595 (GPTPETSLPPPPPEFKRCGTNGLSQP) is disordered.

This sequence belongs to the multicopper oxidase family. Cu cation is required as a cofactor.

Its subcellular location is the secreted. It is found in the extracellular space. The protein localises to the apoplast. It catalyses the reaction 4 hydroquinone + O2 = 4 benzosemiquinone + 2 H2O. In terms of biological role, lignin degradation and detoxification of lignin-derived products. The chain is Laccase-18 (LAC18) from Oryza sativa subsp. japonica (Rice).